A 280-amino-acid polypeptide reads, in one-letter code: Lacto-N-neotetraose biosynthesis glycosyltransferase LgtE (280 aa).

This sequence belongs to the glycosyltransferase 25 family.

The protein operates within glycan metabolism; lacto-N-neotetraose biosynthesis. It functions in the pathway bacterial outer membrane biogenesis; lipooligosaccharide biosynthesis. In terms of biological role, adds the first galactose to the lacto-N-tetraose chain in lipooligosaccharide (LOS). The protein is Lacto-N-neotetraose biosynthesis glycosyltransferase LgtE (lgtE) of Neisseria meningitidis serogroup B (strain ATCC BAA-335 / MC58).